A 421-amino-acid chain; its full sequence is Lipid II:glycine glycyltransferase (421 aa).

This sequence belongs to the FemABX family. Monomer.

The protein localises to the cytoplasm. It carries out the reaction beta-D-GlcNAc-(1-&gt;4)-Mur2Ac(oyl-L-Ala-D-isoglutaminyl-L-Lys-D-Ala-D-Ala)-di-trans,octa-cis-undecaprenyl diphosphate + glycyl-tRNA(Gly) = beta-D-GlcNAc-(1-&gt;4)-Mur2Ac(oyl-L-Ala-D-isoglutaminyl-L-Lys-(N(6)-Gly)-D-Ala-D-Ala)-di-trans,octa-cis-undecaprenyl diphosphate + tRNA(Gly) + H(+). Catalyzes the incorporation of the first glycine of the pentaglycine interpeptide bridge, which is characteristic of the S.aureus peptidoglycan. This glycine is added to the epsilon-amino group of the L-lysine of the membrane-bound lipid II intermediate (GlcNAc-(beta-1,4)-N-acetylmuramic acid(-L-Ala-D-iGln-L-Lys-D-Ala-D-Ala)-pyrophosphoryl-undecaprenol), using glycyl-tRNA(Gly) as donor, in a ribosome-independent mechanism. Involved in methicillin resistance. In Staphylococcus aureus (strain COL), this protein is Lipid II:glycine glycyltransferase (femX).